A 585-amino-acid chain; its full sequence is Arginine--tRNA ligase (585 aa).

The 'HIGH' region signature appears at 127-137 (PNTNKPLHVGH).

It belongs to the class-I aminoacyl-tRNA synthetase family. In terms of assembly, monomer.

It is found in the cytoplasm. The catalysed reaction is tRNA(Arg) + L-arginine + ATP = L-arginyl-tRNA(Arg) + AMP + diphosphate. The polypeptide is Arginine--tRNA ligase (Borrelia garinii subsp. bavariensis (strain ATCC BAA-2496 / DSM 23469 / PBi) (Borreliella bavariensis)).